A 199-amino-acid polypeptide reads, in one-letter code: GTP cyclohydrolase-2 (199 aa).

Arg-49 to Glu-53 contacts GTP. Residues Cys-54, Cys-65, and Cys-67 each coordinate Zn(2+). Residues Gln-70, Glu-92–Arg-94, and Thr-114 each bind GTP. The active-site Proton acceptor is the Asp-126. Arg-128 serves as the catalytic Nucleophile. Positions 149 and 154 each coordinate GTP.

This sequence belongs to the GTP cyclohydrolase II family. As to quaternary structure, homodimer. Zn(2+) is required as a cofactor.

It catalyses the reaction GTP + 4 H2O = 2,5-diamino-6-hydroxy-4-(5-phosphoribosylamino)-pyrimidine + formate + 2 phosphate + 3 H(+). It functions in the pathway cofactor biosynthesis; riboflavin biosynthesis; 5-amino-6-(D-ribitylamino)uracil from GTP: step 1/4. Catalyzes the conversion of GTP to 2,5-diamino-6-ribosylamino-4(3H)-pyrimidinone 5'-phosphate (DARP), formate and pyrophosphate. This is GTP cyclohydrolase-2 from Proteus mirabilis (strain HI4320).